A 971-amino-acid polypeptide reads, in one-letter code: Translation initiation factor IF-2 (971 aa).

The span at 48–63 (DHLRKSHGATDGDKRK) shows a compositional bias: basic and acidic residues. Disordered stretches follow at residues 48 to 86 (DHLR…ARTI) and 100 to 381 (DDVA…STFQ). Low complexity predominate over residues 105–114 (GADQGQAQVA). Over residues 121–181 (ELKRREEEAR…EEEAATKRAA (61 aa)) the composition is skewed to basic and acidic residues. Over residues 182–202 (AEVAAAQQQAAAQQAAAEQEA) the composition is skewed to low complexity. Residues 210–261 (DEARAAAERAAQREAAKKAEDAAREAADKARAEQEEISKRRAAAEAEARAIR) are compositionally biased toward basic and acidic residues. Residues 277–286 (PPKPVEPPKP) are compositionally biased toward pro residues. Low complexity predominate over residues 304–326 (ARPAVKKPAGAAAPATTQAPAGA). Over residues 356–369 (SSGGVDRGWRGGPK) the composition is skewed to gly residues. A tr-type G domain is found at 471–640 (PRPPVVTVMG…LLQAEVLELK (170 aa)). The G1 stretch occupies residues 480 to 487 (GHVDHGKT). Position 480–487 (480–487 (GHVDHGKT)) interacts with GTP. Residues 505-509 (GITQH) are G2. The tract at residues 526–529 (DTPG) is G3. Residues 526 to 530 (DTPGH) and 580 to 583 (NKID) contribute to the GTP site. The interval 580–583 (NKID) is G4. The G5 stretch occupies residues 616–618 (SAK).

This sequence belongs to the TRAFAC class translation factor GTPase superfamily. Classic translation factor GTPase family. IF-2 subfamily.

It is found in the cytoplasm. Its function is as follows. One of the essential components for the initiation of protein synthesis. Protects formylmethionyl-tRNA from spontaneous hydrolysis and promotes its binding to the 30S ribosomal subunits. Also involved in the hydrolysis of GTP during the formation of the 70S ribosomal complex. In Burkholderia orbicola (strain AU 1054), this protein is Translation initiation factor IF-2.